Consider the following 1365-residue polypeptide: Zinc finger protein 423 (1365 aa).

Positions 1-11 (MSRRKQAKPRS) are enriched in basic residues. The segment at 1 to 69 (MSRRKQAKPR…SHDERVGEED (69 aa)) is disordered. Basic and acidic residues predominate over residues 37–51 (VSERDSDRKESRAVG). Residues 76-98 (FTCDNCQQDFECLADLTEHRTNH) form a C2H2-type 1 zinc finger. A disordered region spans residues 99–126 (CPADGDDDPGLSWVASSPSSKDVASPSQ). Residues 112–126 (VASSPSSKDVASPSQ) are compositionally biased toward low complexity. C2H2-type zinc fingers lie at residues 150–172 (YPCQ…EQIH), 178–200 (FKCT…VKLH), 206–228 (YSCQ…LKTH), and 234–256 (FKCS…MQAH). Positions 250–280 (QSHMQAHRKNKEHLAKKDQGKRDGSSSDVTE) are disordered. Over residues 261–274 (EHLAKKDQGKRDGS) the composition is skewed to basic and acidic residues. 3 C2H2-type zinc fingers span residues 286 to 309 (YMCD…LTQH), 318 to 341 (LQCI…DRTH), and 346 to 368 (HKCP…LDSH). The segment at 366–429 (DSHRQPDSSN…LAPSSDHDDG (64 aa)) is disordered. The span at 386–400 (SVASMSSATPDSSAS) shows a compositional bias: low complexity. The C2H2-type 9; degenerate zinc finger occupies 437–461 (YSCPYCSKRDFNSLAVLEIHLKTIH). C2H2-type zinc fingers lie at residues 469 to 492 (HTCQ…RKAH), 513 to 536 (FHCN…RVSH), and 555 to 578 (FFCN…QQTH). A C2H2-type 13; atypical zinc finger spans residues 603-628 (YSCPYCTNSPIFGSLLKLTKHIKENH). C2H2-type zinc fingers lie at residues 675-697 (YPCN…LKSH), 705-728 (QSCP…LTIH), 736-759 (YVCE…LDMH), 764-787 (YHCT…AVKH), 794-817 (YRCT…KHSH), 831-853 (RKCI…ITTH), and 857-880 (YNCR…REKH). The segment covering 885–895 (GGNGNGNGGSQ) has biased composition (gly residues). The tract at residues 885–916 (GGNGNGNGGSQNGTPNGVTQSSKRSTAGSTAA) is disordered. A compositionally biased stretch (polar residues) spans 902 to 913 (VTQSSKRSTAGS). A C2H2-type 21; degenerate zinc finger spans residues 954 to 976 (YACDICGAAYTMESLLQNHRLRD). C2H2-type zinc fingers lie at residues 1000–1022 (HKCN…AQTH), 1029–1051 (YMCP…KVTH), 1090–1112 (FRCV…GTFH), 1201–1224 (LRCS…QVDH), 1249–1271 (YQCI…VANH), 1279–1301 (HECK…LIEH), 1310–1333 (FKCP…FAVH), and 1340–1363 (YDCS…LSQH).

This sequence belongs to the krueppel C2H2-type zinc-finger protein family.

The protein resides in the nucleus. Functionally, transcription factor that can both act as an activator or a repressor depending on the context. Plays a central role in BMP signaling and olfactory neurogenesis. Associates with SMADs in response to bmp2 leading to activate transcription of BMP target genes. Acts as a transcriptional repressor involved in terminal olfactory receptor neurons differentiation. Involved in olfactory neurogenesis by participating in a developmental switch that regulates the transition from differentiation to maturation in olfactory receptor neurons. In Danio rerio (Zebrafish), this protein is Zinc finger protein 423 (znf423).